The chain runs to 162 residues: SsrA-binding protein (162 aa).

It belongs to the SmpB family.

The protein localises to the cytoplasm. Its function is as follows. Required for rescue of stalled ribosomes mediated by trans-translation. Binds to transfer-messenger RNA (tmRNA), required for stable association of tmRNA with ribosomes. tmRNA and SmpB together mimic tRNA shape, replacing the anticodon stem-loop with SmpB. tmRNA is encoded by the ssrA gene; the 2 termini fold to resemble tRNA(Ala) and it encodes a 'tag peptide', a short internal open reading frame. During trans-translation Ala-aminoacylated tmRNA acts like a tRNA, entering the A-site of stalled ribosomes, displacing the stalled mRNA. The ribosome then switches to translate the ORF on the tmRNA; the nascent peptide is terminated with the 'tag peptide' encoded by the tmRNA and targeted for degradation. The ribosome is freed to recommence translation, which seems to be the essential function of trans-translation. This Shewanella frigidimarina (strain NCIMB 400) protein is SsrA-binding protein.